Here is a 486-residue protein sequence, read N- to C-terminus: MKGLLSLLLVGAANALAASYEPRSLTEDMLQGKEKEVWDAIKGEIPGAQLDDYFNPPTAHQREPDEKWDGKLEGKSVNTLWVEEGKDKPSGIEEYGMRFKTVDPSSLGVDNVTQYSGYLDNKKNGQHLFFWFFESRRDPQYDPVILWLNGGPGCSSMTSLFMELGPARVGQDLKLTRNPNSWNNRASIIFLDQPVNVGFSYGKSGAFNTPSASKDVFAFLTLFFKKFPQYALQDFHIAGESYAGHYIPFASYPPMACGKGGYSAVLDQPTCKAMEAAVPQCQKEIKRCYDKPTDVATCVKGAKFCKDALVRPYSRTGQSIYDIRGRCEDPKDLCYPILGWIAKYLNQRHVQKAIGAEVSHFKGCSNHISSQFFAHGDYNQPFHRKIPGILKDVNVLVYAGDADYICNWLGVKEWTEALQWPGRHIFRRKNLSVVYHSVNKWPLGRVKYHNGLAFLQVFKAGHRVPYDQPENALDFFNRWLAGEWTP.

Positions 1–17 (MKGLLSLLLVGAANALA) are cleaved as a signal peptide. Asparagine 111 carries an N-linked (GlcNAc...) asparagine glycan. Residue serine 241 is part of the active site. Intrachain disulfides connect cysteine 281–cysteine 305, cysteine 288–cysteine 298, and cysteine 327–cysteine 334. The active site involves aspartate 403. Position 406 (cysteine 406) interacts with substrate. The N-linked (GlcNAc...) asparagine glycan is linked to asparagine 430. The active site involves histidine 462.

Belongs to the peptidase S10 family.

It localises to the secreted. The catalysed reaction is Release of a C-terminal amino acid with broad specificity.. Its function is as follows. Involved in degradation of small peptides. The sequence is that of Carboxypeptidase Y homolog ARB_07161 from Arthroderma benhamiae (strain ATCC MYA-4681 / CBS 112371) (Trichophyton mentagrophytes).